A 908-amino-acid polypeptide reads, in one-letter code: Mycobactin import ATP-binding/permease protein IrtA (908 aa).

Residues 1–329 (MARGFQGVML…SRLLAPLKKP (329 aa)) lie on the Cytoplasmic side of the membrane. One can recognise an FAD-binding FR-type domain in the interval 15–124 (ARDHQATVVD…MGSRGFSVPE (110 aa)). The siderophore interaction domain stretch occupies residues 16-245 (RDHQATVVDK…AQAYWTEGRA (230 aa)). FAD is bound by residues 70 to 73 (RAYT), 87 to 91 (DMVLH), 97 to 98 (AS), and 241 to 243 (TEG). The disordered stretch occupies residues 245-311 (AMGSSRGETS…GAAQPRTPVR (67 aa)). A compositionally biased stretch (low complexity) spans 253–309 (TSTPAKPAAKTAPAKAAAKPAAASGAGTPEHAAAPAAATTGAPQAAPAPGAAQPRTP). A helical membrane pass occupies residues 330-350 (LIVSGVLQALITLIELAPFVL). An ABC transmembrane type-1 domain is found at 331 to 613 (IVSGVLQALI…IGYGLSGIQT (283 aa)). At 351–371 (LVELARLLLGGAEAERLWTLG) the chain is on the periplasmic side. A helical transmembrane segment spans residues 372–392 (LTAVSLIGLGAVLAAAMTLWL). At 393-444 (HRVDARFAHELRGRLLTKLSRLPLGWFTRRGSASTKQLVQDDTLALHYLITH) the chain is on the cytoplasmic side. The chain crosses the membrane as a helical span at residues 445–465 (AIPDAVAAVVAPVAVLVYLFV). Residues 466 to 469 (ADWR) lie on the Periplasmic side of the membrane. A helical transmembrane segment spans residues 470–490 (VALVLFIPVLVYLVLMSVMTI). The Cytoplasmic segment spans residues 491-557 (QSGSKIAQAP…PFVGKKTLMD (67 aa)). Residues 558–578 (LVTRPATFLWIILVAGVPLVV) form a helical membrane-spanning segment. Residues 579 to 586 (TGRMDPVN) are Periplasmic-facing. Residues 587–607 (LLPFLLLGTTFGARLLGIGYG) form a helical membrane-spanning segment. Residues 608–908 (LSGIQTGMLA…VSADAVEVGR (301 aa)) are Cytoplasmic-facing. An ABC transporter domain is found at 654-887 (VELDRVSFEY…GGRYRGLWDS (234 aa)). 687-694 (GPSGSGKS) contacts ATP.

It belongs to the ABC transporter superfamily. Siderophore-Fe(3+) uptake transporter (SIUT) (TC 3.A.1.21) family. In terms of assembly, forms a heterodimer with IrtB. Requires FAD as cofactor.

It localises to the cell inner membrane. Its activity is regulated as follows. The ATPase activity of IrtAB is stimulated more than 38-fold in the presence of Fe-MBT, and more than 10-fold in the presence of Fe-cMBT. In terms of biological role, part of the ABC transporter complex IrtAB involved in the import of iron-bound mycobactin (Fe-MBT) and carboxymycobactin (Fe-cMBT). Has a preference for Fe-MBT over Fe-cMBT. Mycobactins are then reduced by the siderophore interaction domain to facilitate iron release in the bacterial cell. Transmembrane domains (TMD) form a pore in the membrane and the ATP-binding domain (NBD) is responsible for energy generation. The protein is Mycobactin import ATP-binding/permease protein IrtA of Mycolicibacterium thermoresistibile (strain ATCC 19527 / DSM 44167 / CIP 105390 / JCM 6362 / NCTC 10409 / 316) (Mycobacterium thermoresistibile).